We begin with the raw amino-acid sequence, 430 residues long: Histidinol dehydrogenase (430 aa).

Residues Tyr130, Gln191, and Asn214 each coordinate NAD(+). Substrate is bound by residues Ser237, Gln259, and His262. Residues Gln259 and His262 each contribute to the Zn(2+) site. Active-site proton acceptor residues include Glu327 and His328. Substrate contacts are provided by His328, Asp361, Glu415, and His420. Residue Asp361 participates in Zn(2+) binding. His420 is a binding site for Zn(2+).

This sequence belongs to the histidinol dehydrogenase family. Requires Zn(2+) as cofactor.

The enzyme catalyses L-histidinol + 2 NAD(+) + H2O = L-histidine + 2 NADH + 3 H(+). It participates in amino-acid biosynthesis; L-histidine biosynthesis; L-histidine from 5-phospho-alpha-D-ribose 1-diphosphate: step 9/9. Its function is as follows. Catalyzes the sequential NAD-dependent oxidations of L-histidinol to L-histidinaldehyde and then to L-histidine. The chain is Histidinol dehydrogenase (hisD) from Zymomonas mobilis subsp. mobilis (strain ATCC 31821 / ZM4 / CP4).